The chain runs to 150 residues: UPF0506 protein SJCHGC02381 (150 aa).

The first 18 residues, 1–18 (MNTCIQLLILCLVTVINS), serve as a signal peptide directing secretion. N-linked (GlcNAc...) asparagine glycans are attached at residues asparagine 20, asparagine 24, asparagine 32, asparagine 36, asparagine 48, asparagine 52, asparagine 64, and asparagine 110. Residues 22 to 49 (TDNSTENTIKNETENATETELPETFENE) are disordered. The segment covering 36 to 49 (NATETELPETFENE) has biased composition (acidic residues). Cystine bridges form between cysteine 116–cysteine 130, cysteine 123–cysteine 134, and cysteine 129–cysteine 139.

Belongs to the UPF0506 family.

The protein localises to the secreted. The chain is UPF0506 protein SJCHGC02381 from Schistosoma japonicum (Blood fluke).